Here is a 954-residue protein sequence, read N- to C-terminus: Serine/threonine-protein kinase ste20 (954 aa).

Low complexity predominate over residues 1–17; sequence MDGQLSLLSPTSSSSTS. 2 disordered regions span residues 1–165 and 203–316; these read MDGQ…YDPL and AAPA…RKKS. Over residues 18–28 the composition is skewed to basic residues; that stretch reads HSRKRLTKKQR. Polar residues-rich tracts occupy residues 33 to 42, 57 to 75, and 100 to 121; these read NHRTSSSFNV, SASS…SLAR, and RSHT…TIPT. Composition is skewed to low complexity over residues 127-136, 143-153, and 203-214; these read SPASSSQPQT, SAVASTTVTSS, and AAPAPTSTTTIA. Positions 224–234 are enriched in pro residues; sequence VAPPPPPPPPA. Composition is skewed to low complexity over residues 245–256 and 265–277; these read ARSSKPSKSPKS and ASSF…FSSA. Residues 334-347 enclose the CRIB domain; it reads ISAPENPVHVTHVG. 2 disordered regions span residues 440 to 562 and 587 to 655; these read PMIS…VQAS and QAMA…SNAI. 2 stretches are compositionally biased toward pro residues: residues 463-475 and 514-527; these read RAPP…PGPL and MPPP…PYLP. The region spanning 674–925 is the Protein kinase domain; it reads YRGFTKIGQG…AHDLLRHDFM (252 aa). ATP is bound by residues 680-688 and lysine 703; that span reads IGQGASGGV. Aspartate 793 serves as the catalytic Proton acceptor.

Belongs to the protein kinase superfamily. STE Ser/Thr protein kinase family. STE20 subfamily.

The protein localises to the cytoplasm. Its subcellular location is the nucleus. The catalysed reaction is L-seryl-[protein] + ATP = O-phospho-L-seryl-[protein] + ADP + H(+). It carries out the reaction L-threonyl-[protein] + ATP = O-phospho-L-threonyl-[protein] + ADP + H(+). MAP4K component of the MAPK pathway required for the mating pheromone response and the regulation of cell polarity and cell cycle. Phosphorylates histone H2B to form H2BS10ph. The sequence is that of Serine/threonine-protein kinase ste20 (stk-4) from Neurospora crassa (strain ATCC 24698 / 74-OR23-1A / CBS 708.71 / DSM 1257 / FGSC 987).